The following is a 144-amino-acid chain: Urease subunit beta (144 aa).

Positions 110–119 (HAAPAAPAIP) are enriched in low complexity. Residues 110 to 144 (HAAPAAPAIPARHESAAGDAPSPLKERAGFDNETR) form a disordered region. Residues 133–144 (LKERAGFDNETR) show a composition bias toward basic and acidic residues.

Belongs to the urease beta subunit family. In terms of assembly, heterotrimer of UreA (gamma), UreB (beta) and UreC (alpha) subunits. Three heterotrimers associate to form the active enzyme.

The protein resides in the cytoplasm. The catalysed reaction is urea + 2 H2O + H(+) = hydrogencarbonate + 2 NH4(+). It participates in nitrogen metabolism; urea degradation; CO(2) and NH(3) from urea (urease route): step 1/1. This chain is Urease subunit beta, found in Micrococcus luteus (strain ATCC 4698 / DSM 20030 / JCM 1464 / CCM 169 / CCUG 5858 / IAM 1056 / NBRC 3333 / NCIMB 9278 / NCTC 2665 / VKM Ac-2230) (Micrococcus lysodeikticus).